Reading from the N-terminus, the 496-residue chain is Cytochrome P450 71D181 (496 aa).

A helical; Signal-anchor for type II membrane protein transmembrane segment spans residues 1–21 (MDISISWVAIILVISSYFIFM). Residue C435 coordinates heme. The disordered stretch occupies residues 471–496 (MSETPGLSGPRKNPLIMVPTIHNPTS).

This sequence belongs to the cytochrome P450 family. Heme serves as cofactor. As to expression, expressed at low levels in flowers, leaves and stems.

It localises to the membrane. It catalyses the reaction alpha-terpinene + 2 reduced [NADPH--hemoprotein reductase] + 2 O2 = carvacrol + 2 oxidized [NADPH--hemoprotein reductase] + 3 H2O + 2 H(+). The catalysed reaction is gamma-terpinene + 2 reduced [NADPH--hemoprotein reductase] + 2 O2 = carvacrol + 2 oxidized [NADPH--hemoprotein reductase] + 3 H2O + 2 H(+). It carries out the reaction (4S)-limonene + reduced [NADPH--hemoprotein reductase] + O2 = (1S,5R)-carveol + oxidized [NADPH--hemoprotein reductase] + H2O + H(+). The enzyme catalyses (4R)-limonene + reduced [NADPH--hemoprotein reductase] + O2 = (1R,5S)-carveol + oxidized [NADPH--hemoprotein reductase] + H2O + H(+). The protein operates within secondary metabolite biosynthesis; terpenoid biosynthesis. Involved in the biosynthesis of phenolic monoterpenes natural products thymol and carvacrol which have a broad range of biological activities acting as antimicrobial compounds, insecticides, antioxidants and pharmaceutical agents. Catalyzes the C2-hydroxylation of gamma-terpinene and alpha-terpinene to produce carvacrol. Also mediates the C6-hydroxylation of (4S)-limonene and (4R)-limonene to form carveol. The protein is Cytochrome P450 71D181 of Origanum vulgare (Wild marjoram).